Consider the following 364-residue polypeptide: DNA polymerase IV (364 aa).

Residues 14–198 enclose the UmuC domain; it reads IIHIDMDAFF…LPIEKFHGVG (185 aa). 2 residues coordinate Mg(2+): aspartate 18 and aspartate 116. Residue glutamate 117 is part of the active site.

The protein belongs to the DNA polymerase type-Y family. In terms of assembly, monomer. It depends on Mg(2+) as a cofactor.

The protein localises to the cytoplasm. It carries out the reaction DNA(n) + a 2'-deoxyribonucleoside 5'-triphosphate = DNA(n+1) + diphosphate. Its function is as follows. Poorly processive, error-prone DNA polymerase involved in untargeted mutagenesis. Copies undamaged DNA at stalled replication forks, which arise in vivo from mismatched or misaligned primer ends. These misaligned primers can be extended by PolIV. Exhibits no 3'-5' exonuclease (proofreading) activity. May be involved in translesional synthesis, in conjunction with the beta clamp from PolIII. This chain is DNA polymerase IV, found in Streptococcus pyogenes serotype M28 (strain MGAS6180).